The sequence spans 355 residues: NADH dehydrogenase [ubiquinone] 1 alpha subcomplex subunit 10, mitochondrial (355 aa).

The transit peptide at 1-35 (MALRLLKLAATSASARVVAAGAQRVRGIHSSVQCK) directs the protein to the mitochondrion. Phosphoserine; by PINK1 is present on Ser-250. N6-succinyllysine is present on Lys-285.

It belongs to the complex I NDUFA10 subunit family. As to quaternary structure, complex I is composed of 45 different subunits. This a component of the hydrophobic protein fraction. It depends on FAD as a cofactor. Phosphorylation at Ser-250 by PINK1 is required for the binding and/or reduction of the complex I substrate ubiquinone.

It localises to the mitochondrion matrix. Functionally, accessory subunit of the mitochondrial membrane respiratory chain NADH dehydrogenase (Complex I), that is believed not to be involved in catalysis. Complex I functions in the transfer of electrons from NADH to the respiratory chain. The immediate electron acceptor for the enzyme is believed to be ubiquinone. The protein is NADH dehydrogenase [ubiquinone] 1 alpha subcomplex subunit 10, mitochondrial (NDUFA10) of Homo sapiens (Human).